Here is a 233-residue protein sequence, read N- to C-terminus: Rab-like protein 3 (233 aa).

The small GTPase-like stretch occupies residues 1 to 233 (MASLDRVKVL…RFNFKSLHSD (233 aa)). GTP-binding positions include 16-21 (GVGKSS), 148-150 (KFD), and 179-180 (DC).

It belongs to the small GTPase superfamily. Rab family. As to quaternary structure, homodimer.

Required for KRAS signaling regulation and modulation of cell proliferation. Regulator of KRAS prenylation, and probably prenylation of other small GTPases. Required for lymphocyte development and function. Not required for myeloid cell development. The protein is Rab-like protein 3 (rabl3) of Danio rerio (Zebrafish).